We begin with the raw amino-acid sequence, 196 residues long: Phosphatidyl-N-methylethanolamine N-methyltransferase (196 aa).

Position 1 (methionine 1) is a topological domain, lumenal. Positions 2–28 form an intramembrane region, helical; the sequence is AIFEINNSFLICAVSIALNPLLWNIAA. The Lumenal segment spans residues 29 to 40; the sequence is RSEYNHKTLTKL. Residues 41–62 traverse the membrane as a helical segment; that stretch reads ANGDSKKACYMLAACIFVAGIV. Residues 63-89 lie on the Cytoplasmic side of the membrane; it reads RDLIYQNALKQQPTLGIFMNPLVQGIA. Residues 90–110 traverse the membrane as a helical segment; the sequence is KLIFCFGSVLVLSSMYKLGLV. Residue 94–96 coordinates S-adenosyl-L-methionine; the sequence is CFG. Residues 111-153 lie on the Lumenal side of the membrane; the sequence is GTYLGDYFGFLLPERVSGFPFNVNDNPMYNGSTLCFLSTALRY. Residues 154–174 traverse the membrane as a helical segment; the sequence is GKVAGLLLTLEVFFVYRIALK. Over 175–196 the chain is Cytoplasmic; that stretch reads FEEPFTAKIYAARDSKQAKKSE. An S-adenosyl-L-methionine-binding site is contributed by 176-177; the sequence is EE.

This sequence belongs to the class VI-like SAM-binding methyltransferase superfamily. PEMT/PEM2 methyltransferase family.

The protein localises to the endoplasmic reticulum membrane. It is found in the mitochondrion membrane. The catalysed reaction is a 1,2-diacyl-sn-glycero-3-phospho-N-methylethanolamine + S-adenosyl-L-methionine = a 1,2-diacyl-sn-glycero-3-phospho-N,N-dimethylethanolamine + S-adenosyl-L-homocysteine + H(+). It carries out the reaction a 1,2-diacyl-sn-glycero-3-phospho-N,N-dimethylethanolamine + S-adenosyl-L-methionine = a 1,2-diacyl-sn-glycero-3-phosphocholine + S-adenosyl-L-homocysteine + H(+). Its pathway is phospholipid metabolism; phosphatidylcholine biosynthesis. Functionally, catalyzes the second two steps of the methylation pathway of phosphatidylcholine biosynthesis, the SAM-dependent methylation of phosphatidylmonomethylethanolamine (PMME) to phosphatidyldimethylethanolamine (PDME) and of PDME to phosphatidylcholine (PC). In Schizosaccharomyces pombe (strain 972 / ATCC 24843) (Fission yeast), this protein is Phosphatidyl-N-methylethanolamine N-methyltransferase.